The following is a 143-amino-acid chain: Transcriptional regulator MraZ (143 aa).

SpoVT-AbrB domains follow at residues 5-47 (EYKH…PMHE) and 76-119 (ATEC…SSKR).

Belongs to the MraZ family. Forms oligomers.

It is found in the cytoplasm. It localises to the nucleoid. The chain is Transcriptional regulator MraZ from Halothermothrix orenii (strain H 168 / OCM 544 / DSM 9562).